The primary structure comprises 722 residues: Ataxin-7-like protein 2 (722 aa).

Disordered stretches follow at residues 106-228, 288-317, 347-403, and 531-600; these read LSKL…PPKT, NSRKGESPKEKSPGRKEQVLERPSQELPSS, SRAS…DCHY, and AITS…GCRG. Over residues 181 to 191 the composition is skewed to pro residues; that stretch reads GKPPMAPPSKE. An SCA7 domain is found at 230–297; it reads RKMARKECDL…NSRKGESPKE (68 aa). Positions 290 to 311 are enriched in basic and acidic residues; sequence RKGESPKEKSPGRKEQVLERPS. The segment covering 541 to 556 has biased composition (low complexity); sequence PSPSFSKLPPSKASKS. Over residues 558-569 the composition is skewed to basic and acidic residues; the sequence is KGKDGVEVEAPS. Residue Ser575 is modified to Phosphoserine.

This is Ataxin-7-like protein 2 (ATXN7L2) from Homo sapiens (Human).